The following is a 239-amino-acid chain: MINDVISPEFDENGRAMRRIRSFVRRQGRLTKGQQHALDNYWPVMGVEYQAEPVDITALFGRDAPTVLEIGFGMGASLVTMAGHNPQQNFLGIEVHSPGVGACLADATEAELSNLRVMCHDAVEVLENMIPDGSLDMVQLFFPDPWHKARHNKRRIVQTPFVELVRRKLKVGGVFHMATDWQPYAEHMLEVMNGISGYRNLSSDNDYVPRPDSRPLTKFELRGQRLGHGVWDLMFERKE.

The S-adenosyl-L-methionine site is built by Glu69, Glu94, Asp121, and Asp144. Residue Asp144 is part of the active site. Lys148 lines the substrate pocket. The interval 150-155 (RHNKRR) is interaction with RNA. Residues Asp180 and 217 to 220 (TKFE) each bind substrate.

Belongs to the class I-like SAM-binding methyltransferase superfamily. TrmB family. As to quaternary structure, monomer.

It carries out the reaction guanosine(46) in tRNA + S-adenosyl-L-methionine = N(7)-methylguanosine(46) in tRNA + S-adenosyl-L-homocysteine. It functions in the pathway tRNA modification; N(7)-methylguanine-tRNA biosynthesis. Functionally, catalyzes the formation of N(7)-methylguanine at position 46 (m7G46) in tRNA. The protein is tRNA (guanine-N(7)-)-methyltransferase of Serratia proteamaculans (strain 568).